The chain runs to 101 residues: Small ribosomal subunit protein uS14 (101 aa).

It belongs to the universal ribosomal protein uS14 family. In terms of assembly, part of the 30S ribosomal subunit. Contacts proteins S3 and S10.

Binds 16S rRNA, required for the assembly of 30S particles and may also be responsible for determining the conformation of the 16S rRNA at the A site. The protein is Small ribosomal subunit protein uS14 of Delftia acidovorans (strain DSM 14801 / SPH-1).